Reading from the N-terminus, the 803-residue chain is Leucine--tRNA ligase (803 aa).

Positions 40–51 match the 'HIGH' region motif; the sequence is PYPSGAGLHVGH. A 'KMSKS' region motif is present at residues 575 to 579; the sequence is KMSKS. Lys578 is a binding site for ATP.

Belongs to the class-I aminoacyl-tRNA synthetase family.

Its subcellular location is the cytoplasm. It carries out the reaction tRNA(Leu) + L-leucine + ATP = L-leucyl-tRNA(Leu) + AMP + diphosphate. This is Leucine--tRNA ligase from Listeria innocua serovar 6a (strain ATCC BAA-680 / CLIP 11262).